Here is a 250-residue protein sequence, read N- to C-terminus: 5'-nucleotidase SurE (250 aa).

Residues aspartate 8, aspartate 9, serine 40, and asparagine 94 each coordinate a divalent metal cation.

Belongs to the SurE nucleotidase family. A divalent metal cation is required as a cofactor.

Its subcellular location is the cytoplasm. It catalyses the reaction a ribonucleoside 5'-phosphate + H2O = a ribonucleoside + phosphate. Its function is as follows. Nucleotidase that shows phosphatase activity on nucleoside 5'-monophosphates. This chain is 5'-nucleotidase SurE, found in Wolbachia pipientis wMel.